The chain runs to 235 residues: Elongation factor Tu, chloroplastic (235 aa).

Residues 1 to 125 (KNMITGAAQM…KVDSYIPTPQ (125 aa)) enclose the tr-type G domain. 47-50 (NKED) is a GTP binding site.

It belongs to the TRAFAC class translation factor GTPase superfamily. Classic translation factor GTPase family. EF-Tu/EF-1A subfamily.

It localises to the plastid. The protein localises to the chloroplast. The catalysed reaction is GTP + H2O = GDP + phosphate + H(+). Its function is as follows. GTP hydrolase that promotes the GTP-dependent binding of aminoacyl-tRNA to the A-site of ribosomes during protein biosynthesis. This is Elongation factor Tu, chloroplastic (tufA) from Gonium pectorale (Green alga).